Reading from the N-terminus, the 322-residue chain is Malate dehydrogenase (322 aa).

NAD(+) contacts are provided by residues 10 to 15 (GSGQIG) and Asp34. Residues Arg83 and Arg89 each coordinate substrate. NAD(+) is bound by residues Asn96 and 119-121 (ITN). Residues Asn121 and Arg152 each contribute to the substrate site. Residue His176 is the Proton acceptor of the active site.

Belongs to the LDH/MDH superfamily. MDH type 3 family.

It carries out the reaction (S)-malate + NAD(+) = oxaloacetate + NADH + H(+). In terms of biological role, catalyzes the reversible oxidation of malate to oxaloacetate. This Bradyrhizobium sp. (strain ORS 278) protein is Malate dehydrogenase.